The sequence spans 146 residues: MRHYEIVFIVHPDQSEQVSAMTERYSNIVTGRSGKIHRLEDWGRRQLTYPIQKLHKAHYVLMNIECDQESLNELEHSFKFNDAILRHLVIRMNGPITTPSPMMQEGKSRPPHSSDEDSENTAPAKAKTADSPGEDTRTTEESDPKP.

Residues 94–146 (GPITTPSPMMQEGKSRPPHSSDEDSENTAPAKAKTADSPGEDTRTTEESDPKP) form a disordered region. Basic and acidic residues-rich tracts occupy residues 106–115 (GKSRPPHSSD) and 134–146 (EDTR…DPKP).

It belongs to the bacterial ribosomal protein bS6 family.

Functionally, binds together with bS18 to 16S ribosomal RNA. The polypeptide is Small ribosomal subunit protein bS6 (Nitrosomonas europaea (strain ATCC 19718 / CIP 103999 / KCTC 2705 / NBRC 14298)).